The primary structure comprises 372 residues: Tomoregulin-1 (372 aa).

The first 36 residues, 1 to 36 (MGAQAPLRLPAAPPLAVCGYTSVLLLFAFCLPGSRA), serve as a signal peptide directing secretion. The Extracellular segment spans residues 37 to 322 (SNQPAGGGGD…VPSRQKLTHV (286 aa)). N-linked (GlcNAc...) asparagine glycosylation is present at N55. Residues 90–137 (ACQFQCHTNYIPVCGSNGDTYQNECFLRRAACKHQKDITVVARGPCYS) enclose the Kazal-like 1 domain. 3 disulfide bridges follow: C91/C121, C95/C114, and C103/C135. An N-linked (GlcNAc...) asparagine glycan is attached at N139. The segment at 139–161 (NGSGSGEGEEEGSGAGAHRKHSK) is disordered. The Kazal-like 2 domain maps to 181-229 (VCNIDCSGYSFNPVCASDGSSYNNPCFVREASCIKQEQIDIRHLGHCTD). 6 cysteine pairs are disulfide-bonded: C182/C213, C186/C206, C195/C227, C267/C280, C275/C291, and C293/C302. The EGF-like domain maps to 263–303 (SHMPCPENLNGYCIHGKCEFIYSTQKASCRCESGYTGQHCE). A helical transmembrane segment spans residues 323-343 (LIAAIIGAVQIAIIVAIVMCI). The Cytoplasmic segment spans residues 344-372 (TRKCPKNNRGRRQKQNLGHFTSDTSSRMV). A disordered region spans residues 351–372 (NRGRRQKQNLGHFTSDTSSRMV). The span at 358–372 (QNLGHFTSDTSSRMV) shows a compositional bias: polar residues.

It belongs to the tomoregulin family. In terms of assembly, may interact with ST14. In terms of tissue distribution, maily expressed in neurons. Expressed in brain, neurointermediate lobe, pars distalis, pancreas, ovary and testis.

It is found in the cell membrane. Its function is as follows. Neuron-specific restriction factor that prevents herpes simplex virus 1 (HHV-1) infection in the brain by blocking viral entry. Also able to restrict herpes simplex virus 2 (HHV-2) infection, although to a lesser extent. Acts by preventing the association between the viral glycoprotein D (gD) and its cell surface receptor NECTIN1, thereby inhibiting fusion of the virus and the cell membrane. Also able to prevent the association between the viral glycoprotein B (gB) and MYH9/NMMHC-IIA and MYH10/NMMHC-IIB receptors. This chain is Tomoregulin-1, found in Mus musculus (Mouse).